The primary structure comprises 593 residues: UvrABC system protein C (593 aa).

The region spanning 17–94 (MEPGCYLMKD…IKQYQPRYNI (78 aa)) is the GIY-YIG domain. Positions 199-234 (KTILKSLEERMLTASESLDFERAKEYRDLIQHIQNL) constitute a UVR domain.

It belongs to the UvrC family. Interacts with UvrB in an incision complex.

It localises to the cytoplasm. In terms of biological role, the UvrABC repair system catalyzes the recognition and processing of DNA lesions. UvrC both incises the 5' and 3' sides of the lesion. The N-terminal half is responsible for the 3' incision and the C-terminal half is responsible for the 5' incision. This chain is UvrABC system protein C, found in Staphylococcus aureus (strain bovine RF122 / ET3-1).